A 158-amino-acid polypeptide reads, in one-letter code: Large ribosomal subunit protein uL13 (158 aa).

Positions 129–158 (PEHGHHAQKPVALDFGAMNNKNGRGNNAGR) are disordered. Positions 144–158 (GAMNNKNGRGNNAGR) are enriched in low complexity.

It belongs to the universal ribosomal protein uL13 family. In terms of assembly, part of the 50S ribosomal subunit.

This protein is one of the early assembly proteins of the 50S ribosomal subunit, although it is not seen to bind rRNA by itself. It is important during the early stages of 50S assembly. This is Large ribosomal subunit protein uL13 from Anaplasma phagocytophilum (strain HZ).